The sequence spans 296 residues: Cobalamin trafficking protein CblD (296 aa).

The N-terminal 38 residues, 1–38, are a transit peptide targeting the mitochondrion; that stretch reads MAHVLCNRARLVSYLPGFCSLVKRVINPRAFSTAGSSG. An N6-acetyllysine modification is found at Lys-203.

As to quaternary structure, heterodimer with MMACHC. Forms a multiprotein complex with MMACHC, MTR and MTRR.

The protein localises to the cytoplasm. Its subcellular location is the mitochondrion. Its function is as follows. Involved in cobalamin metabolism and trafficking. Plays a role in regulating the biosynthesis and the proportion of two coenzymes, methylcob(III)alamin (MeCbl) and 5'-deoxyadenosylcobalamin (AdoCbl). Promotes oxidation of cob(II)alamin bound to MMACHC. The processing of cobalamin in the cytosol occurs in a multiprotein complex composed of at least MMACHC, MMADHC, MTRR (methionine synthase reductase) and MTR (methionine synthase) which may contribute to shuttle safely and efficiently cobalamin towards MTR in order to produce methionine. This chain is Cobalamin trafficking protein CblD, found in Mus musculus (Mouse).